We begin with the raw amino-acid sequence, 422 residues long: Serine--tRNA ligase (422 aa).

229-231 contributes to the L-serine binding site; sequence TAE. 260–262 contributes to the ATP binding site; the sequence is RKE. An L-serine-binding site is contributed by E283. 347-350 contacts ATP; it reads EISS. Position 383 (S383) interacts with L-serine.

It belongs to the class-II aminoacyl-tRNA synthetase family. Type-1 seryl-tRNA synthetase subfamily. In terms of assembly, homodimer. The tRNA molecule binds across the dimer.

It localises to the cytoplasm. It carries out the reaction tRNA(Ser) + L-serine + ATP = L-seryl-tRNA(Ser) + AMP + diphosphate + H(+). The enzyme catalyses tRNA(Sec) + L-serine + ATP = L-seryl-tRNA(Sec) + AMP + diphosphate + H(+). Its pathway is aminoacyl-tRNA biosynthesis; selenocysteinyl-tRNA(Sec) biosynthesis; L-seryl-tRNA(Sec) from L-serine and tRNA(Sec): step 1/1. In terms of biological role, catalyzes the attachment of serine to tRNA(Ser). Is also able to aminoacylate tRNA(Sec) with serine, to form the misacylated tRNA L-seryl-tRNA(Sec), which will be further converted into selenocysteinyl-tRNA(Sec). The polypeptide is Serine--tRNA ligase (Geobacter sulfurreducens (strain ATCC 51573 / DSM 12127 / PCA)).